We begin with the raw amino-acid sequence, 411 residues long: Methylthioribose-1-phosphate isomerase (411 aa).

Ser2 carries the N-acetylserine modification. Asp280 acts as the Proton donor in catalysis. At Ser351 the chain carries Phosphoserine.

The protein belongs to the eIF-2B alpha/beta/delta subunits family. MtnA subfamily. In terms of assembly, homodimer.

The protein localises to the cytoplasm. It is found in the nucleus. The catalysed reaction is 5-(methylsulfanyl)-alpha-D-ribose 1-phosphate = 5-(methylsulfanyl)-D-ribulose 1-phosphate. Its pathway is amino-acid biosynthesis; L-methionine biosynthesis via salvage pathway; L-methionine from S-methyl-5-thio-alpha-D-ribose 1-phosphate: step 1/6. Catalyzes the interconversion of methylthioribose-1-phosphate (MTR-1-P) into methylthioribulose-1-phosphate (MTRu-1-P). The protein is Methylthioribose-1-phosphate isomerase of Saccharomyces cerevisiae (strain JAY291) (Baker's yeast).